A 49-amino-acid chain; its full sequence is Large ribosomal subunit protein bL33B (49 aa).

Belongs to the bacterial ribosomal protein bL33 family.

The protein is Large ribosomal subunit protein bL33B of Latilactobacillus sakei subsp. sakei (strain 23K) (Lactobacillus sakei subsp. sakei).